The sequence spans 411 residues: Corticotropin-releasing factor receptor 2 (411 aa).

A signal peptide (not cleaved) is located at residues 1-19 (MDAALLLSLLEANCSLALA). Over 1-108 (MDAALLLSLL…EPILDDKQRK (108 aa)) the chain is Extracellular. N-linked (GlcNAc...) asparagine glycosylation is found at N13, N41, N74, N86, and N94. 3 disulfides stabilise this stretch: C14/C50, C40/C83, and C64/C98. The chain crosses the membrane as a helical span at residues 109 to 139 (YDLHYRIALIINYLGHCVSVVALVAAFLLFL). Residues 140-146 (VLRSIRC) are Cytoplasmic-facing. A helical membrane pass occupies residues 147–171 (LRNVIHWNLITTFILRNITWFLLQL). Residues 172–185 (IDHEVHEGNEVWCR) lie on the Extracellular side of the membrane. C184 and C254 are oxidised to a cystine. The helical transmembrane segment at 186-214 (CVTTIFNYFVVTNFFWMFVEGCYLHTAIV) threads the bilayer. At 215-221 (MTYSTEH) the chain is on the cytoplasmic side. A helical transmembrane segment spans residues 222 to 249 (LRKWLFLFIGWCIPCPIIVAWAVGKLYY). Topologically, residues 250-265 (ENEQCWFGKEPGDLVD) are extracellular. The chain crosses the membrane as a helical span at residues 266-291 (YIYQGPIILVLLINFVFLFNIVRILM). Residues 292–302 (TKLRASTTSET) lie on the Cytoplasmic side of the membrane. Residues 303 to 327 (IQYRKAVKATLVLLPLLGITYMLFF) traverse the membrane as a helical segment. Residues 328-334 (VNPGEDD) are Extracellular-facing. Residues 335–364 (LSQIVFIYFNSFLQSFQGFFVSVFYCFFNG) form a helical membrane-spanning segment. The Cytoplasmic segment spans residues 365–411 (EVRSALRKRWHRWQDHHALRVPVARAMSIPTSPTRISFHSIKQTAAV).

This sequence belongs to the G-protein coupled receptor 2 family. Monomer. Interacts (via N-terminal extracellular domain) with CRF, UCN, UCN2 and UCN3. Post-translationally, a N-glycosylation site within the signal peptide impedes its proper cleavage and function. As to expression, predominantly expressed in limbic regions of the brain such as the lateral septum, the entorhinal cortex, the hypothalamic ventromedial nucleus and several amygdaloid nuclei. Also detectable in lung, kidney and heart.

The protein localises to the cell membrane. In terms of biological role, G-protein coupled receptor for CRH (corticotropin-releasing factor), UCN (urocortin), UCN2 and UCN3. Has high affinity for UCN. Ligand binding causes a conformation change that triggers signaling via guanine nucleotide-binding proteins (G proteins) and down-stream effectors, such as adenylate cyclase. Promotes the activation of adenylate cyclase, leading to increased intracellular cAMP levels. This is Corticotropin-releasing factor receptor 2 (Crhr2) from Rattus norvegicus (Rat).